The primary structure comprises 241 residues: Ribulose-phosphate 3-epimerase 2 (241 aa).

S21 is a substrate binding site. 3 residues coordinate a divalent metal cation: H46, D48, and H79. The Proton acceptor role is filled by D48. Substrate-binding positions include H79, 155–158 (GFGG), 192–194 (DGG), and 214–215 (GS). Position 192 (D192) interacts with a divalent metal cation. The active-site Proton donor is the D192.

The protein belongs to the ribulose-phosphate 3-epimerase family. A divalent metal cation serves as cofactor.

It catalyses the reaction D-ribulose 5-phosphate = D-xylulose 5-phosphate. It participates in carbohydrate degradation. Functionally, catalyzes the reversible epimerization of D-ribulose 5-phosphate to D-xylulose 5-phosphate. This is Ribulose-phosphate 3-epimerase 2 from Cupriavidus necator (strain ATCC 17699 / DSM 428 / KCTC 22496 / NCIMB 10442 / H16 / Stanier 337) (Ralstonia eutropha).